Reading from the N-terminus, the 127-residue chain is Copper resistance protein C (127 aa).

The signal sequence occupies residues methionine 1–alanine 25. Cu cation-binding residues include histidine 26, methionine 65, methionine 68, methionine 71, methionine 76, and histidine 116.

Belongs to the CopC family.

The protein resides in the periplasm. Functionally, copper-binding protein involved in copper resistance. The sequence is that of Copper resistance protein C from Xanthomonas campestris pv. juglandis (Xanthomonas arboricola pv. juglandis).